The following is a 105-amino-acid chain: Thioredoxin (105 aa).

One can recognise a Thioredoxin domain in the interval 2–105; it reads VKQIESKYAF…KLEATINELI (104 aa). K3 carries the post-translational modification N6-acetyllysine. At K8 the chain carries N6-succinyllysine. Residues C32 and C35 each act as nucleophile in the active site. C32 and C35 are disulfide-bonded. K39 is subject to N6-acetyllysine. 2 positions are modified to S-nitrosocysteine: C62 and C69. Residue C73 is modified to S-nitrosocysteine; alternate. K94 bears the N6-acetyllysine; alternate mark. Position 94 is an N6-succinyllysine; alternate (K94).

It belongs to the thioredoxin family. As to quaternary structure, homodimer; disulfide-linked. Interacts with TXNIP through the redox-active site. Interacts with MAP3K5 and CASP3. Interacts with APEX1; the interaction stimulates the FOS/JUN AP-1 DNA-binding activity in a redox-dependent manner. Post-translationally, in the fully reduced protein, both Cys-69 and Cys-73 are nitrosylated in response to nitric oxide (NO). When two disulfide bonds are present in the protein, only Cys-73 is nitrosylated. Cys-73 can serve as donor for nitrosylation of target proteins.

The protein localises to the nucleus. It localises to the cytoplasm. It is found in the secreted. Participates in various redox reactions through the reversible oxidation of its active center dithiol to a disulfide and catalyzes dithiol-disulfide exchange reactions. Plays a role in the reversible S-nitrosylation of cysteine residues in target proteins, and thereby contributes to the response to intracellular nitric oxide. Nitrosylates the active site Cys of CASP3 in response to nitric oxide (NO), and thereby inhibits caspase-3 activity. Induces the FOS/JUN AP-1 DNA binding activity in ionizing radiation (IR) cells through its oxidation/reduction status and stimulates AP-1 transcriptional activity. In Bos taurus (Bovine), this protein is Thioredoxin (TXN).